The sequence spans 62 residues: UPF0434 protein ABO_2103 (62 aa).

The protein belongs to the UPF0434 family.

This is UPF0434 protein ABO_2103 from Alcanivorax borkumensis (strain ATCC 700651 / DSM 11573 / NCIMB 13689 / SK2).